Reading from the N-terminus, the 220-residue chain is Membrane steroid-binding protein 1 (220 aa).

Residues 22–42 traverse the membrane as a helical segment; the sequence is VVFFTALALAFAIYQVISGWF. The Cytochrome b5 heme-binding domain occupies 74-171; it reads EITEEELKQY…SKYAKVGTVK (98 aa). Residues 74–171 form a steroid-binding region; sequence EITEEELKQY…SKYAKVGTVK (98 aa). Residues 174–220 are disordered; that stretch reads GSEPETASVSEPTENVEQDAHVTTTPGKTVVDKSDDAPAETVLKKEE. Polar residues predominate over residues 178–200; that stretch reads ETASVSEPTENVEQDAHVTTTPG. The segment covering 203–220 has biased composition (basic and acidic residues); it reads VVDKSDDAPAETVLKKEE.

This sequence belongs to the cytochrome b5 family. MAPR subfamily. Interacts with BAK1 (via extracellular region). As to expression, expressed in cotyledons, stems, roots, leaves, flower and silique stalks, pistils and stigmas, but not in anthers.

Its subcellular location is the cell membrane. The protein resides in the endosome membrane. Its function is as follows. MSBP1 can bind to multiple steroid compounds with different affinities. Negatively regulates cell elongation and brassinosteroid signaling. May act as a coreceptor with BAK1 and enhances its endocytosis. This chain is Membrane steroid-binding protein 1 (MSBP1), found in Arabidopsis thaliana (Mouse-ear cress).